A 187-amino-acid polypeptide reads, in one-letter code: Acireductone dioxygenase 4 (187 aa).

At A2 the chain carries N-acetylalanine. 4 residues coordinate Fe(2+): H89, H91, E95, and H134. 4 residues coordinate Ni(2+): H89, H91, E95, and H134.

Belongs to the acireductone dioxygenase (ARD) family. The cofactor is Fe(2+). It depends on Ni(2+) as a cofactor.

The protein localises to the cytoplasm. The protein resides in the nucleus. The catalysed reaction is 1,2-dihydroxy-5-(methylsulfanyl)pent-1-en-3-one + O2 = 4-methylsulfanyl-2-oxobutanoate + formate + 2 H(+). It catalyses the reaction 1,2-dihydroxy-5-(methylsulfanyl)pent-1-en-3-one + O2 = 3-(methylsulfanyl)propanoate + CO + formate + 2 H(+). It participates in amino-acid biosynthesis; L-methionine biosynthesis via salvage pathway; L-methionine from S-methyl-5-thio-alpha-D-ribose 1-phosphate: step 5/6. Functionally, catalyzes 2 different reactions between oxygen and the acireductone 1,2-dihydroxy-3-keto-5-methylthiopentene (DHK-MTPene) depending upon the metal bound in the active site. Fe-containing acireductone dioxygenase (Fe-ARD) produces formate and 2-keto-4-methylthiobutyrate (KMTB), the alpha-ketoacid precursor of methionine in the methionine recycle pathway. Ni-containing acireductone dioxygenase (Ni-ARD) produces methylthiopropionate, carbon monoxide and formate, and does not lie on the methionine recycle pathway. This is Acireductone dioxygenase 4 (ARD4) from Arabidopsis thaliana (Mouse-ear cress).